The primary structure comprises 805 residues: Sucrose synthase 1 (805 aa).

A GT-B glycosyltransferase region spans residues 274 to 751; the sequence is MVFNVVILSP…GLQRIYEKYT (478 aa).

The protein belongs to the glycosyltransferase 1 family. Plant sucrose synthase subfamily.

It carries out the reaction an NDP-alpha-D-glucose + D-fructose = a ribonucleoside 5'-diphosphate + sucrose + H(+). Sucrose-cleaving enzyme that provides UDP-glucose and fructose for various metabolic pathways. This is Sucrose synthase 1 from Tulipa gesneriana (Garden tulip).